Reading from the N-terminus, the 191-residue chain is Small ribosomal subunit protein uS5 (191 aa).

The tract at residues Met1 to Ser21 is disordered. The 64-residue stretch at Phe23–Val86 folds into the S5 DRBM domain.

Part of the 30S ribosomal subunit. Contacts proteins S4 and S8.

Its function is as follows. With S4 and S12 plays an important role in translational accuracy. Functionally, located at the back of the 30S subunit body where it stabilizes the conformation of the head with respect to the body. The sequence is that of Small ribosomal subunit protein uS5 from Rhodopseudomonas palustris (strain ATCC BAA-98 / CGA009).